Reading from the N-terminus, the 273-residue chain is 4-hydroxy-tetrahydrodipicolinate reductase (273 aa).

11–16 (GAGGRM) is a binding site for NAD(+). Arg-37 lines the NADP(+) pocket. Residues 100 to 102 (GTT) and 124 to 127 (AANY) each bind NAD(+). His-157 (proton donor/acceptor) is an active-site residue. His-158 contributes to the (S)-2,3,4,5-tetrahydrodipicolinate binding site. Residue Lys-161 is the Proton donor of the active site. Residue 167-168 (GT) coordinates (S)-2,3,4,5-tetrahydrodipicolinate.

Belongs to the DapB family.

The protein localises to the cytoplasm. It carries out the reaction (S)-2,3,4,5-tetrahydrodipicolinate + NAD(+) + H2O = (2S,4S)-4-hydroxy-2,3,4,5-tetrahydrodipicolinate + NADH + H(+). It catalyses the reaction (S)-2,3,4,5-tetrahydrodipicolinate + NADP(+) + H2O = (2S,4S)-4-hydroxy-2,3,4,5-tetrahydrodipicolinate + NADPH + H(+). It functions in the pathway amino-acid biosynthesis; L-lysine biosynthesis via DAP pathway; (S)-tetrahydrodipicolinate from L-aspartate: step 4/4. Its function is as follows. Catalyzes the conversion of 4-hydroxy-tetrahydrodipicolinate (HTPA) to tetrahydrodipicolinate. The polypeptide is 4-hydroxy-tetrahydrodipicolinate reductase (Acinetobacter baumannii (strain AB307-0294)).